Here is a 156-residue protein sequence, read N- to C-terminus: SsrA-binding protein (156 aa).

Residues 127 to 156 (GKKKYDKREDLKKKDAKRDVDRAMRDRQKY) form a disordered region. Over residues 132–156 (DKREDLKKKDAKRDVDRAMRDRQKY) the composition is skewed to basic and acidic residues.

It belongs to the SmpB family.

The protein resides in the cytoplasm. Its function is as follows. Required for rescue of stalled ribosomes mediated by trans-translation. Binds to transfer-messenger RNA (tmRNA), required for stable association of tmRNA with ribosomes. tmRNA and SmpB together mimic tRNA shape, replacing the anticodon stem-loop with SmpB. tmRNA is encoded by the ssrA gene; the 2 termini fold to resemble tRNA(Ala) and it encodes a 'tag peptide', a short internal open reading frame. During trans-translation Ala-aminoacylated tmRNA acts like a tRNA, entering the A-site of stalled ribosomes, displacing the stalled mRNA. The ribosome then switches to translate the ORF on the tmRNA; the nascent peptide is terminated with the 'tag peptide' encoded by the tmRNA and targeted for degradation. The ribosome is freed to recommence translation, which seems to be the essential function of trans-translation. This Exiguobacterium sp. (strain ATCC BAA-1283 / AT1b) protein is SsrA-binding protein.